Consider the following 248-residue polypeptide: Phosphomannomutase (248 aa).

Aspartate 12 (nucleophile) is an active-site residue. Mg(2+)-binding residues include aspartate 12 and aspartate 14. Residue aspartate 14 is the Proton donor/acceptor of the active site. 6 residues coordinate alpha-D-mannose 1-phosphate: arginine 21, arginine 123, arginine 134, arginine 141, serine 179, and aspartate 181. Mg(2+) is bound by residues aspartate 207, phenylalanine 219, and threonine 224.

Belongs to the eukaryotic PMM family. Homodimer. Mg(2+) is required as a cofactor.

The protein resides in the cytoplasm. The catalysed reaction is alpha-D-mannose 1-phosphate = D-mannose 6-phosphate. It participates in nucleotide-sugar biosynthesis; GDP-alpha-D-mannose biosynthesis; alpha-D-mannose 1-phosphate from D-fructose 6-phosphate: step 2/2. Functionally, catalyzes the interconversion of mannose-6-phosphate to mannose-1-phosphate, the precursor for the synthesis of GDP-mannose. GDP-mannose is an essential sugar nucleotide for the synthesis of D-mannose-containing cell wall polysaccharides (galactomannans and glucomannans), glycolipids, glycoproteins and the antioxidant L-ascorbate. In Spinacia oleracea (Spinach), this protein is Phosphomannomutase.